A 1220-amino-acid polypeptide reads, in one-letter code: Limbin (1220 aa).

The signal sequence occupies residues 1–29; it reads MGATGPTGAGGRATWVLAGNILAAALVLG. The Extracellular segment spans residues 30-210; sequence SGPRALPPSF…VLPNHGLHAA (181 aa). The disordered stretch occupies residues 38-59; that stretch reads SFPALGPGSPSRPGPAGPWASS. Asn-100, Asn-109, and Asn-130 each carry an N-linked (GlcNAc...) asparagine glycan. A helical membrane pass occupies residues 211–231; it reads GFIAAFLISLLLTVAALFFLA. Residues 232–1220 are Cytoplasmic-facing; that stretch reads RGRCLQGGML…KKANRALGLD (989 aa). 4 coiled-coil regions span residues 355-404, 563-644, 854-875, and 920-1005; these read EEYE…SAAE, KQKL…AALD, GELL…AESL, and QILE…VREE.

Component of the EvC complex composed of EFCAB7, IQCE, EVC2 and EVC; built from two subcomplexes, EVC2:EVC and EFCAB7:IQCE. Interacts with EVC. Interacts (via N-terminal end) with EFCAB7. Interacts (via N-terminal end) with IQCE. In terms of tissue distribution, expressed in long and cranial bones, kidney and heart. Strongly expressed in proliferating chondrocytes, osteoblasts and osteoclasts.

The protein resides in the cell membrane. It localises to the cytoplasm. It is found in the cytoskeleton. The protein localises to the cilium basal body. Its subcellular location is the cell projection. The protein resides in the cilium. It localises to the cilium membrane. It is found in the nucleus. Its function is as follows. Component of the EvC complex that positively regulates ciliary Hedgehog (Hh) signaling. Plays a critical role in bone formation and skeletal development. May be involved in early embryonic morphogenesis. This chain is Limbin (Evc2), found in Mus musculus (Mouse).